We begin with the raw amino-acid sequence, 309 residues long: Probable RNA polymerase II nuclear localization protein SLC7A6OS (309 aa).

Disordered regions lie at residues 101 to 134 and 233 to 287; these read GRYRVLSSRRSLGTTSSGQESEYTPGNPEAAGNS and PEDI…QRMW. The span at 106–118 shows a compositional bias: low complexity; it reads LSSRRSLGTTSSG. Composition is skewed to acidic residues over residues 233–245 and 254–263; these read PEDIYDDEDDENS and PEEESSDGDE. Ser302 and Ser308 each carry phosphoserine.

This sequence belongs to the IWR1/SLC7A6OS family.

Its subcellular location is the cytoplasm. It is found in the nucleus. Functionally, directs RNA polymerase II nuclear import. This chain is Probable RNA polymerase II nuclear localization protein SLC7A6OS (SLC7A6OS), found in Homo sapiens (Human).